Reading from the N-terminus, the 455-residue chain is Alcohol acyl transferase 1 allele GSb (455 aa).

Catalysis depends on proton acceptor residues H164 and N385.

Belongs to the plant acyltransferase family. In terms of tissue distribution, expressed at very low levels in the skin of ripe fruit.

Its function is as follows. Involved in the biosynthesis of volatile esters which confer ripe apple fruit flavor. Alcohol acyl transferase that can use a wide range of alcohols as substrate to produce esters. This is Alcohol acyl transferase 1 allele GSb from Malus domestica (Apple).